The following is a 334-amino-acid chain: Aspartate carbamoyltransferase catalytic subunit (334 aa).

Arg71 and Thr72 together coordinate carbamoyl phosphate. L-aspartate is bound at residue Lys99. Residues Arg121, His151, and Gln154 each coordinate carbamoyl phosphate. Arg184 and Arg239 together coordinate L-aspartate. Residues Gly280 and Pro281 each coordinate carbamoyl phosphate.

This sequence belongs to the aspartate/ornithine carbamoyltransferase superfamily. ATCase family. In terms of assembly, heterododecamer (2C3:3R2) of six catalytic PyrB chains organized as two trimers (C3), and six regulatory PyrI chains organized as three dimers (R2).

It carries out the reaction carbamoyl phosphate + L-aspartate = N-carbamoyl-L-aspartate + phosphate + H(+). The protein operates within pyrimidine metabolism; UMP biosynthesis via de novo pathway; (S)-dihydroorotate from bicarbonate: step 2/3. Catalyzes the condensation of carbamoyl phosphate and aspartate to form carbamoyl aspartate and inorganic phosphate, the committed step in the de novo pyrimidine nucleotide biosynthesis pathway. This chain is Aspartate carbamoyltransferase catalytic subunit, found in Pseudomonas savastanoi pv. phaseolicola (strain 1448A / Race 6) (Pseudomonas syringae pv. phaseolicola (strain 1448A / Race 6)).